The sequence spans 403 residues: Phosphopentomutase (403 aa).

The Mn(2+) site is built by D13, D298, H303, D339, H340, and H351.

The protein belongs to the phosphopentomutase family. Requires Mn(2+) as cofactor.

It is found in the cytoplasm. It catalyses the reaction 2-deoxy-alpha-D-ribose 1-phosphate = 2-deoxy-D-ribose 5-phosphate. It carries out the reaction alpha-D-ribose 1-phosphate = D-ribose 5-phosphate. The protein operates within carbohydrate degradation; 2-deoxy-D-ribose 1-phosphate degradation; D-glyceraldehyde 3-phosphate and acetaldehyde from 2-deoxy-alpha-D-ribose 1-phosphate: step 1/2. Isomerase that catalyzes the conversion of deoxy-ribose 1-phosphate (dRib-1-P) and ribose 1-phosphate (Rib-1-P) to deoxy-ribose 5-phosphate (dRib-5-P) and ribose 5-phosphate (Rib-5-P), respectively. This chain is Phosphopentomutase, found in Streptococcus gordonii (strain Challis / ATCC 35105 / BCRC 15272 / CH1 / DL1 / V288).